The primary structure comprises 479 residues: Anaerobic nitric oxide reductase flavorubredoxin (479 aa).

Residues 30–210 (LRGSSYNSYL…PFSRLVTPKI (181 aa)) form a zinc metallo-hydrolase region. Fe cation contacts are provided by histidine 79, glutamate 81, aspartate 83, histidine 147, aspartate 166, and histidine 227. Positions 254-393 (ITIFYDTMSN…LCREHGREIA (140 aa)) constitute a Flavodoxin-like domain. FMN-binding positions include 260–264 (TMSNN) and 342–369 (AFGS…EMSL). One can recognise a Rubredoxin-like domain in the interval 423–474 (GPRMQCSVCQWIYDPAKGEPMQDVAPGTPWSEVPDNFLCPECSLGKDVFDEL). Fe cation-binding residues include cysteine 428, cysteine 431, cysteine 461, and cysteine 464.

This sequence in the N-terminal section; belongs to the zinc metallo-hydrolase group 3 family. As to quaternary structure, homotetramer. The cofactor is Fe cation. FMN serves as cofactor.

The protein localises to the cytoplasm. It participates in nitrogen metabolism; nitric oxide reduction. Anaerobic nitric oxide reductase; uses NADH to detoxify nitric oxide (NO), protecting several 4Fe-4S NO-sensitive enzymes. Has at least 2 reductase partners, only one of which (NorW, flavorubredoxin reductase) has been identified. NO probably binds to the di-iron center; electrons enter from the NorW at rubredoxin and are transferred sequentially to the FMN center and the di-iron center. Also able to function as an aerobic oxygen reductase. This is Anaerobic nitric oxide reductase flavorubredoxin from Escherichia coli (strain SMS-3-5 / SECEC).